The sequence spans 181 residues: MRVVLLGPPGAGKGTQAQKLSEKLGIPQISTGELFRSNIENGTKLGLEAKRYLDAGDLVPAELTNQLVDDRLSEPDAANGFILDGFPRSLQQAKALHEMLERRGTDIDAVLEFRVSQDELLARLKARGRADDTDEVILNRMKVYRDETAPLLDYYRDQLKTVDAVGTLDEVFARALCALGK.

Position 10-15 (10-15 (GAGKGT)) interacts with ATP. Residues 30–59 (STGELFRSNIENGTKLGLEAKRYLDAGDLV) form an NMP region. AMP contacts are provided by residues Thr31, Arg36, 57-59 (DLV), 85-88 (GFPR), and Gln92. Residues 126–132 (ARGRADD) form an LID region. Arg127 provides a ligand contact to ATP. Arg129 and Arg140 together coordinate AMP. Gly166 provides a ligand contact to ATP.

This sequence belongs to the adenylate kinase family. Monomer.

It is found in the cytoplasm. The enzyme catalyses AMP + ATP = 2 ADP. It functions in the pathway purine metabolism; AMP biosynthesis via salvage pathway; AMP from ADP: step 1/1. In terms of biological role, catalyzes the reversible transfer of the terminal phosphate group between ATP and AMP. Plays an important role in cellular energy homeostasis and in adenine nucleotide metabolism. The chain is Adenylate kinase from Mycolicibacterium paratuberculosis (strain ATCC BAA-968 / K-10) (Mycobacterium paratuberculosis).